A 445-amino-acid chain; its full sequence is Methionine aminopeptidase 2-3 (445 aa).

The disordered stretch occupies residues 14 to 115 (ISDADANGAD…ENRYRTTSEE (102 aa)). Residues 38 to 47 (EDDDSDDDVA) show a composition bias toward acidic residues. Basic residues predominate over residues 60–75 (AKKKKNKKRKPKKKQP). The span at 85–95 (PLSQLFPNNTY) shows a compositional bias: polar residues. Over residues 97–115 (KGEEVEYKDENRYRTTSEE) the composition is skewed to basic and acidic residues. Residue histidine 198 coordinates substrate. Positions 218, 229, and 298 each coordinate a divalent metal cation. Histidine 306 is a binding site for substrate. A divalent metal cation is bound by residues glutamate 331 and glutamate 426.

The protein belongs to the peptidase M24A family. Methionine aminopeptidase eukaryotic type 2 subfamily. Co(2+) is required as a cofactor. The cofactor is Zn(2+). Requires Mn(2+) as cofactor. Fe(2+) serves as cofactor.

It is found in the cytoplasm. The catalysed reaction is Release of N-terminal amino acids, preferentially methionine, from peptides and arylamides.. In terms of biological role, cotranslationally removes the N-terminal methionine from nascent proteins. The N-terminal methionine is often cleaved when the second residue in the primary sequence is small and uncharged (Met-Ala-, Cys, Gly, Pro, Ser, Thr, or Val). This is Methionine aminopeptidase 2-3 from Neosartorya fischeri (strain ATCC 1020 / DSM 3700 / CBS 544.65 / FGSC A1164 / JCM 1740 / NRRL 181 / WB 181) (Aspergillus fischerianus).